We begin with the raw amino-acid sequence, 445 residues long: UPF0210 protein SPJ_0248 (445 aa).

The protein belongs to the UPF0210 family. In terms of assembly, homodimer.

The polypeptide is UPF0210 protein SPJ_0248 (Streptococcus pneumoniae (strain JJA)).